A 282-amino-acid polypeptide reads, in one-letter code: uncharacterized protein (282 aa).

Belongs to the ycf80 family.

The protein resides in the plastid. It localises to the chloroplast. This is an uncharacterized protein from Guillardia theta (Cryptophyte).